The primary structure comprises 192 residues: Fe/S biogenesis protein NfuA (192 aa).

Residues Cys-149 and Cys-152 each coordinate [4Fe-4S] cluster.

The protein belongs to the NfuA family. As to quaternary structure, homodimer. It depends on [4Fe-4S] cluster as a cofactor.

Involved in iron-sulfur cluster biogenesis. Binds a 4Fe-4S cluster, can transfer this cluster to apoproteins, and thereby intervenes in the maturation of Fe/S proteins. Could also act as a scaffold/chaperone for damaged Fe/S proteins. This chain is Fe/S biogenesis protein NfuA, found in Shewanella sediminis (strain HAW-EB3).